We begin with the raw amino-acid sequence, 54 residues long: Ovomucoid (54 aa).

Residues 4 to 54 (VDCSDYPKPVCTLEDMPLCGSDNITYHNKCYFCNAVAHSNGTLTFSHFGKC) form the Kazal-like domain. 3 cysteine pairs are disulfide-bonded: C6/C36, C14/C33, and C22/C54. A glycan (N-linked (GlcNAc...) asparagine) is linked at N43.

It localises to the secreted. The protein is Ovomucoid of Carpococcyx renauldi (Coral-billed ground-cuckoo).